We begin with the raw amino-acid sequence, 27 residues long: Delta-conotoxin TxVIB (27 aa).

Disulfide bonds link Cys-2–Cys-17, Cys-9–Cys-21, and Cys-16–Cys-26.

This sequence belongs to the conotoxin O1 superfamily. Expressed by the venom duct.

The protein resides in the secreted. In terms of biological role, delta-conotoxins bind to site 6 of voltage-gated sodium channels (Nav) and inhibit the inactivation process. Induces membrane depolarization and spontaneous repetitive firing of neurons. The polypeptide is Delta-conotoxin TxVIB (Conus textile (Cloth-of-gold cone)).